The chain runs to 443 residues: Trigger factor (443 aa).

The PPIase FKBP-type domain maps to 163–249 (KDAAIIDYQA…LKSLKEEILP (87 aa)).

This sequence belongs to the FKBP-type PPIase family. Tig subfamily.

It localises to the cytoplasm. It catalyses the reaction [protein]-peptidylproline (omega=180) = [protein]-peptidylproline (omega=0). Functionally, involved in protein export. Acts as a chaperone by maintaining the newly synthesized protein in an open conformation. Functions as a peptidyl-prolyl cis-trans isomerase. The chain is Trigger factor from Desulfosudis oleivorans (strain DSM 6200 / JCM 39069 / Hxd3) (Desulfococcus oleovorans).